We begin with the raw amino-acid sequence, 323 residues long: Methionyl-tRNA formyltransferase (323 aa).

115 to 118 (SLLP) is a binding site for (6S)-5,6,7,8-tetrahydrofolate.

The protein belongs to the Fmt family.

The enzyme catalyses L-methionyl-tRNA(fMet) + (6R)-10-formyltetrahydrofolate = N-formyl-L-methionyl-tRNA(fMet) + (6S)-5,6,7,8-tetrahydrofolate + H(+). Functionally, attaches a formyl group to the free amino group of methionyl-tRNA(fMet). The formyl group appears to play a dual role in the initiator identity of N-formylmethionyl-tRNA by promoting its recognition by IF2 and preventing the misappropriation of this tRNA by the elongation apparatus. The sequence is that of Methionyl-tRNA formyltransferase from Lactococcus lactis subsp. cremoris (strain MG1363).